Reading from the N-terminus, the 369-residue chain is Isocitrate dehydrogenase [NAD] subunit 2, mitochondrial (369 aa).

A mitochondrion-targeting transit peptide spans 1–15 (MLRNTFFRNTSRRFL). Thr105 is modified (phosphothreonine). Substrate is bound by residues Arg119, Arg129, and Arg150. Thr153 carries the phosphothreonine modification. Asp237 contributes to the substrate binding site. The Mg(2+) site is built by Asp237, Asp263, and Asp267. Phosphothreonine is present on residues Thr327 and Thr349.

Belongs to the isocitrate and isopropylmalate dehydrogenases family. As to quaternary structure, octamer of two non-identical subunits IDH1 and IDH2. The cofactor is Mg(2+). Mn(2+) serves as cofactor.

It localises to the mitochondrion matrix. It catalyses the reaction D-threo-isocitrate + NAD(+) = 2-oxoglutarate + CO2 + NADH. Allosterically regulated by several compounds including AMP, NAD(+), and citrate. Functionally, performs an essential role in the oxidative function of the citric acid cycle. Also binds RNA; specifically to the 5'-untranslated leaders of mitochondrial mRNAs. The chain is Isocitrate dehydrogenase [NAD] subunit 2, mitochondrial (IDH2) from Saccharomyces cerevisiae (strain ATCC 204508 / S288c) (Baker's yeast).